We begin with the raw amino-acid sequence, 315 residues long: MKRKKIAIVGSGFTGQGTALFAAARDLGDIVLVDLPARENYAKGVALDMMEAMPVYGSDTRLVGTSDYAEIAGADVVVITAGVPRKPGMSREDLVNTNAGIVKDVAEKVARYAPDSVIIVLTNPVDSMTYVALKASGFPKNRVIGQSGVLDTARFRTFLANAIGCSFQDVVGCVLGGHGDDMVPLVRYTSAGGIPVEKLLPKETIDAIVERTRKGGGEIVNLMGTSAGYAPGMALVEMIDAILNDRKRILPSIAYLEGEYGYTDMCLGVMTVLGGGGLEKVIELDLTDEEKVALDKGAQGVRNLIEMLKAGILAQ.

Residues 10 to 15 (GSGFTG) and Asp34 each bind NAD(+). The substrate site is built by Arg85 and Arg91. NAD(+) contacts are provided by residues Asn98 and 121 to 123 (LTN). Positions 123 and 154 each coordinate substrate. His178 acts as the Proton acceptor in catalysis.

It belongs to the LDH/MDH superfamily. MDH type 3 family.

It carries out the reaction (S)-malate + NAD(+) = oxaloacetate + NADH + H(+). Catalyzes the reversible oxidation of malate to oxaloacetate. In Symbiobacterium thermophilum (strain DSM 24528 / JCM 14929 / IAM 14863 / T), this protein is Malate dehydrogenase.